The following is a 349-amino-acid chain: tRNA pseudouridine synthase D (349 aa).

The segment at 1 to 22 (MTDAPLVTAELPGSGGSLRRSP) is disordered. The active-site Nucleophile is D78. The TRUD domain occupies 150 to 304 (GLPNLFGPQR…AEGTRRAARL (155 aa)).

The protein belongs to the pseudouridine synthase TruD family.

It catalyses the reaction uridine(13) in tRNA = pseudouridine(13) in tRNA. Responsible for synthesis of pseudouridine from uracil-13 in transfer RNAs. This Anaeromyxobacter sp. (strain Fw109-5) protein is tRNA pseudouridine synthase D.